Here is a 197-residue protein sequence, read N- to C-terminus: Phospholipid hydroperoxide glutathione peroxidase (197 aa).

The residue at position 40 (Ser-40) is a Phosphoserine. Sec-73 is an active-site residue. Position 73 (Sec-73) is a non-standard amino acid, selenocysteine.

Belongs to the glutathione peroxidase family. As to quaternary structure, monomer. Has a tendency to form higher mass oligomers. Interacts with FUNDC1; this interaction promotes GPX4 recruitment into mitochondria through TOM/TIM complex where it is degraded by mitophagy.

It localises to the mitochondrion. It is found in the cytoplasm. It carries out the reaction a hydroperoxy polyunsaturated fatty acid + 2 glutathione = a hydroxy polyunsaturated fatty acid + glutathione disulfide + H2O. The enzyme catalyses 2 glutathione + H2O2 = glutathione disulfide + 2 H2O. The catalysed reaction is tert-butyl hydroperoxide + 2 glutathione = tert-butanol + glutathione disulfide + H2O. It catalyses the reaction cumene hydroperoxide + 2 glutathione = 2-phenylpropan-2-ol + glutathione disulfide + H2O. It carries out the reaction (9S)-hydroperoxy-(10E,12Z)-octadecadienoate + 2 glutathione = (9S)-hydroxy-(10E,12Z)-octadecadienoate + glutathione disulfide + H2O. The enzyme catalyses (13S)-hydroperoxy-(9Z,11E)-octadecadienoate + 2 glutathione = (13S)-hydroxy-(9Z,11E)-octadecadienoate + glutathione disulfide + H2O. The catalysed reaction is (5S)-hydroperoxy-(6E,8Z,11Z,14Z)-eicosatetraenoate + 2 glutathione = (5S)-hydroxy-(6E,8Z,11Z,14Z)-eicosatetraenoate + glutathione disulfide + H2O. It catalyses the reaction (12R)-hydroperoxy-(5Z,8Z,10E,14Z)-eicosatetraenoate + 2 glutathione = (12R)-hydroxy-(5Z,8Z,10E,14Z)-eicosatetraenoate + glutathione disulfide + H2O. It carries out the reaction (12S)-hydroperoxy-(5Z,8Z,10E,14Z)-eicosatetraenoate + 2 glutathione = (12S)-hydroxy-(5Z,8Z,10E,14Z)-eicosatetraenoate + glutathione disulfide + H2O. The enzyme catalyses (15S)-hydroperoxy-(5Z,8Z,11Z,13E)-eicosatetraenoate + 2 glutathione = (15S)-hydroxy-(5Z,8Z,11Z,13E)-eicosatetraenoate + glutathione disulfide + H2O. The catalysed reaction is (5S)-hydroperoxy-(6E,8Z,11Z,14Z,17Z)-eicosapentaenoate + 2 glutathione = (5S)-hydroxy-(6E,8Z,11Z,14Z,17Z)-eicosapentaenoate + glutathione disulfide + H2O. It catalyses the reaction (12S)-hydroperoxy-(5Z,8Z,10E,14Z,17Z)-eicosapentaenoate + 2 glutathione = (12S)-hydroxy-(5Z,8Z,10E,14Z,17Z)-eicosapentaenoate + glutathione disulfide + H2O. It carries out the reaction (15S)-hydroperoxy-(5Z,8Z,11Z,13E,17Z)-eicosapentaenoate + 2 glutathione = (15S)-hydroxy-(5Z,8Z,11Z,13E,17Z)-eicosapentaenoate + glutathione disulfide + H2O. The enzyme catalyses (15S)-hydroperoxy-(11Z,13E)-eicosadienoate + 2 glutathione = (15S)-hydroxy-(11Z,13E)-eicosadienoate + glutathione disulfide + H2O. The catalysed reaction is (17S)-hydroperoxy-(4Z,7Z,10Z,13Z,15E,19Z)-docosahexaenoate + 2 glutathione = (17S)-hydroxy-(4Z,7Z,10Z,13Z,15E,19Z)-docosahexaenoate + glutathione disulfide + H2O. It catalyses the reaction a hydroperoxy-1,2-diacyl-glycero-3-phosphocholine + 2 glutathione = a hydroxy-1,2-diacyl-glycero-3-phosphocholine + glutathione disulfide + H2O. Functionally, essential antioxidant peroxidase that directly reduces phospholipid hydroperoxide even if they are incorporated in membranes and lipoproteins. Can also reduce fatty acid hydroperoxide, cholesterol hydroperoxide and thymine hydroperoxide. Plays a key role in protecting cells from oxidative damage by preventing membrane lipid peroxidation. Required to prevent cells from ferroptosis, a non-apoptotic cell death resulting from an iron-dependent accumulation of lipid reactive oxygen species. The presence of selenocysteine (Sec) versus Cys at the active site is essential for life: it provides resistance to overoxidation and prevents cells against ferroptosis. The presence of Sec at the active site is also essential for the survival of a specific type of parvalbumin-positive interneurons, thereby preventing against fatal epileptic seizures. May be required to protect cells from the toxicity of ingested lipid hydroperoxides. Required for normal sperm development and male fertility. Essential for maturation and survival of photoreceptor cells. Plays a role in a primary T-cell response to viral and parasitic infection by protecting T-cells from ferroptosis and by supporting T-cell expansion. Plays a role of glutathione peroxidase in platelets in the arachidonic acid metabolism. Reduces hydroperoxy ester lipids formed by a 15-lipoxygenase that may play a role as down-regulator of the cellular 15-lipoxygenase pathway. Can also reduce small soluble hydroperoxides such as H2O2, cumene hydroperoxide and tert-butyl hydroperoxide. This is Phospholipid hydroperoxide glutathione peroxidase from Bos taurus (Bovine).